Here is a 371-residue protein sequence, read N- to C-terminus: 3-isopropylmalate dehydrogenase (371 aa).

Residues arginine 104, arginine 114, arginine 142, and aspartate 232 each contribute to the substrate site. Mg(2+) contacts are provided by aspartate 232, aspartate 256, and aspartate 260. 290 to 302 (GSAPDIAGQDKAN) lines the NAD(+) pocket.

This sequence belongs to the isocitrate and isopropylmalate dehydrogenases family. LeuB type 1 subfamily. As to quaternary structure, homodimer. It depends on Mg(2+) as a cofactor. Requires Mn(2+) as cofactor.

The protein resides in the cytoplasm. The enzyme catalyses (2R,3S)-3-isopropylmalate + NAD(+) = 4-methyl-2-oxopentanoate + CO2 + NADH. Its pathway is amino-acid biosynthesis; L-leucine biosynthesis; L-leucine from 3-methyl-2-oxobutanoate: step 3/4. Catalyzes the oxidation of 3-carboxy-2-hydroxy-4-methylpentanoate (3-isopropylmalate) to 3-carboxy-4-methyl-2-oxopentanoate. The product decarboxylates to 4-methyl-2 oxopentanoate. This chain is 3-isopropylmalate dehydrogenase, found in Synechococcus sp. (strain JA-2-3B'a(2-13)) (Cyanobacteria bacterium Yellowstone B-Prime).